Here is a 972-residue protein sequence, read N- to C-terminus: DNA cross-link repair 1A protein (972 aa).

Positions 14–80 (YKSIRKRKPQ…SEDLDPCKDD (67 aa)) are disordered. Positions 23–37 (QSNPDSTSVSMQTVT) are enriched in polar residues. Positions 39–54 (GKCRPKRKGSGNRKKS) are enriched in basic residues. A compositionally biased stretch (basic and acidic residues) spans 64–80 (SEQRLRPSEDLDPCKDD). The segment at 105 to 135 (DGYCPSCQMPFSLLVVQTPRWHVAECLDTPG) adopts a UBZ4-type zinc-finger fold. The Zn(2+) site is built by C108, C111, H126, and C130. Disordered stretches follow at residues 191–219 (KSSC…NNEC) and 552–623 (GEAC…TTDE). Polar residues predominate over residues 210 to 219 (NLKNVPNNEC).

This sequence belongs to the DNA repair metallo-beta-lactamase (DRMBL) family. As to quaternary structure, binds PIAS1.

It localises to the nucleus. It catalyses the reaction a beta-lactam + H2O = a substituted beta-amino acid. Functionally, may be required for DNA interstrand cross-link repair. The chain is DNA cross-link repair 1A protein (DCLRE1A) from Gallus gallus (Chicken).